Here is a 196-residue protein sequence, read N- to C-terminus: Endoribonuclease YbeY (196 aa).

The Zn(2+) site is built by His-120, His-124, and His-130.

Belongs to the endoribonuclease YbeY family. Zn(2+) is required as a cofactor.

The protein resides in the cytoplasm. In terms of biological role, single strand-specific metallo-endoribonuclease involved in late-stage 70S ribosome quality control and in maturation of the 3' terminus of the 16S rRNA. The polypeptide is Endoribonuclease YbeY (Corynebacterium diphtheriae (strain ATCC 700971 / NCTC 13129 / Biotype gravis)).